The chain runs to 295 residues: Gamma-glutamyl-L-1-hydroxyisopropylamide hydrolase (295 aa).

Residues 5-221 (RILICDGNTE…LRESARSLVE (217 aa)) enclose the Glutamine amidotransferase type-1 domain. Catalysis depends on C104, which acts as the Nucleophile. Catalysis depends on residues H200 and E202.

It catalyses the reaction gamma-L-glutamyl-L-alaninol + H2O = L-alaninol + L-glutamate. Functionally, involved in the degradation of isopropylamine, which is a constituent of the herbicides atrazine. Catalyzes the hydrolysis of gamma-glutamyl-L-alaninol (GALO) to L-alaninol and L-glutamate. It can also uses gamma-glutamyl-isopropylamide, gamma-glutamyl-ethylamide, L-glutamine, and gamma-glutamyl-p-nitroanilide. This is Gamma-glutamyl-L-1-hydroxyisopropylamide hydrolase (ipuF) from Pseudomonas sp.